The sequence spans 116 residues: Iron-sulfur cluster insertion protein ErpA (116 aa).

Iron-sulfur cluster is bound by residues Cys44, Cys108, and Cys110.

The protein belongs to the HesB/IscA family. Homodimer. Iron-sulfur cluster is required as a cofactor.

Functionally, required for insertion of 4Fe-4S clusters for at least IspG. The sequence is that of Iron-sulfur cluster insertion protein ErpA from Shewanella pealeana (strain ATCC 700345 / ANG-SQ1).